The primary structure comprises 307 residues: Type 2A encapsulin shell protein (307 aa).

This sequence belongs to the encapsulin family. Family 2A subfamily. Homooligomeric. The encapsulin nanocompartment is formed by 60 subunits; monomers form pentamers which assemble to form shells. There are 12 charged pores where the pentamers meet as well as 3-fold axis channels and dimer channels. The N-terminus is blocked.

Its subcellular location is the encapsulin nanocompartment. The protein localises to the cytoplasm. It is found in the cytosol. The protein resides in the cell membrane. Functionally, shell component of a type 2A encapsulin nanocompartment. Forms encapsulin nanocompartments about 24 nm in diameter from 60 monomers. Probably encapsulates at least cysteine desulfurase (CyD, AC O32975) and allows passage of cysteine into its interior, probably involved in sulfur metabolism. Expression in M.smegmatis generates a multimeric protein, whereas expression in E.coli does not. This Mycobacterium leprae (strain TN) protein is Type 2A encapsulin shell protein.